A 555-amino-acid polypeptide reads, in one-letter code: Benzoyl-CoA-dihydrodiol lyase (555 aa).

This sequence belongs to the benzoyl-CoA oxygenase component C family. As to quaternary structure, homodimer.

The catalysed reaction is 2,3-epoxy-2,3-dihydrobenzoyl-CoA + 2 H2O = (3Z)-6-oxohex-3-enoyl-CoA + formate + H(+). Functionally, catalyzes the ring opening of 2,3-epoxy-2,3-dihydroxybenzoyl-CoA to form 3,4-didehydroadipyl-CoA semialdehyde. The sequence is that of Benzoyl-CoA-dihydrodiol lyase (boxC) from Aromatoleum evansii (Azoarcus evansii).